The following is a 121-amino-acid chain: uncharacterized protein (121 aa).

A helical transmembrane segment spans residues 9 to 29 (LTILIASIYIIFFVNAAPTLY). A disordered region spans residues 91–121 (EELPTYPPTMTTPLETTPLDTSPPVLPSAIP). The segment covering 98–113 (PTMTTPLETTPLDTSP) has biased composition (low complexity).

It is found in the host membrane. This is an uncharacterized protein from Alcelaphine herpesvirus 1 (strain C500) (AlHV-1).